The primary structure comprises 320 residues: Malate dehydrogenase (320 aa).

Residues 10 to 15 and aspartate 34 each bind NAD(+); that span reads GSGMIG. The substrate site is built by arginine 83 and arginine 89. Residues asparagine 96 and 119 to 121 contribute to the NAD(+) site; that span reads ITN. Asparagine 121 and arginine 152 together coordinate substrate. The active-site Proton acceptor is histidine 176.

Belongs to the LDH/MDH superfamily. MDH type 3 family.

The enzyme catalyses (S)-malate + NAD(+) = oxaloacetate + NADH + H(+). Functionally, catalyzes the reversible oxidation of malate to oxaloacetate. This Bartonella tribocorum (strain CIP 105476 / IBS 506) protein is Malate dehydrogenase.